The chain runs to 270 residues: MSRLHLHLISDSTGETLENIAKAAIAQFDDVEVVRHFWPMVRSESHLDRIMAEVRASPGMILFTLVNGELRSSLERRARMLDLPTVAALDAVTDALSRMLGQEAKARPGRQHVLDAAYFARVEAIQFTVAHDDGIGWENWEQADIILAGVSRTSKTPTSIYLANRGFKTANIPIVPESPPPSALFNLKRPMVVGLTTGLDRLVQVRRNRLLSLNQAPETSYVDDERVKAELAFARRMFADNGWPVIDVTRRSIEETAAAVIKLVEDRASA.

149-156 provides a ligand contact to ADP; sequence GVSRTSKT.

The protein belongs to the pyruvate, phosphate/water dikinase regulatory protein family. PDRP subfamily.

It catalyses the reaction N(tele)-phospho-L-histidyl/L-threonyl-[pyruvate, phosphate dikinase] + ADP = N(tele)-phospho-L-histidyl/O-phospho-L-threonyl-[pyruvate, phosphate dikinase] + AMP + H(+). It carries out the reaction N(tele)-phospho-L-histidyl/O-phospho-L-threonyl-[pyruvate, phosphate dikinase] + phosphate + H(+) = N(tele)-phospho-L-histidyl/L-threonyl-[pyruvate, phosphate dikinase] + diphosphate. Functionally, bifunctional serine/threonine kinase and phosphorylase involved in the regulation of the pyruvate, phosphate dikinase (PPDK) by catalyzing its phosphorylation/dephosphorylation. In Sphingopyxis alaskensis (strain DSM 13593 / LMG 18877 / RB2256) (Sphingomonas alaskensis), this protein is Putative pyruvate, phosphate dikinase regulatory protein.